The chain runs to 1187 residues: DNA-directed RNA polymerase subunit beta (1187 aa).

It belongs to the RNA polymerase beta chain family. In terms of assembly, the RNAP catalytic core consists of 2 alpha, 1 beta, 1 beta' and 1 omega subunit. When a sigma factor is associated with the core the holoenzyme is formed, which can initiate transcription.

The catalysed reaction is RNA(n) + a ribonucleoside 5'-triphosphate = RNA(n+1) + diphosphate. Its function is as follows. DNA-dependent RNA polymerase catalyzes the transcription of DNA into RNA using the four ribonucleoside triphosphates as substrates. This chain is DNA-directed RNA polymerase subunit beta, found in Streptococcus mutans serotype c (strain ATCC 700610 / UA159).